The chain runs to 448 residues: MSTTNAINGNLYEQLHQGRTNMYKSKVDVVLGAQWGDEGKGKVVDMLASEVDIVCRCQGGNNAGHTVVANGTEFDFHLLPSGVVNEKCISVIGNGVVIHLPSLFDEVLKNEAKGLQHLEHRLIISDRAHLVFDFHQHVDGMQEAEKGGKSLGTTKKGIGPAYSSKATRNGIRVGELLGDFNAFSDKFKLIVATHLRLFPSINVDVEAELTRYRDYAEKVRPYVKDTICFLHTALRNGKTILVEGANAAMLDIDFGTYPYVTSSNCSIGGVLTGLGLPPQTIGEVIGVVKAYTTRVGDGPFPSEQLNEIGDLLQTRGFEVGVTTKRKRRCGWLDIPLLRYTSLVNGYTCICLTKLDILDTLPEIKVAVSYKKANGDKLDHFPGTIAELGNIEVEYAVLPGWQTSTEHIRNFKELPENAQNYVRFLEKELSVPVRWVGVGKGRESIINVH.

GTP-binding positions include glycine 36 to lysine 42 and glycine 64 to threonine 66. Residue aspartate 37 is the Proton acceptor of the active site. Mg(2+)-binding residues include aspartate 37 and glycine 64. IMP-binding positions include aspartate 37–lysine 40, asparagine 62–histidine 65, threonine 154, arginine 168, asparagine 246, threonine 261, and arginine 325. Histidine 65 functions as the Proton donor in the catalytic mechanism. Substrate is bound at residue valine 321–arginine 327. Residues arginine 327, lysine 353–aspartate 355, and glycine 436–glycine 438 contribute to the GTP site.

The protein belongs to the adenylosuccinate synthetase family. Homodimer. It depends on Mg(2+) as a cofactor.

The protein resides in the cytoplasm. It carries out the reaction IMP + L-aspartate + GTP = N(6)-(1,2-dicarboxyethyl)-AMP + GDP + phosphate + 2 H(+). It functions in the pathway purine metabolism; AMP biosynthesis via de novo pathway; AMP from IMP: step 1/2. Functionally, plays an important role in the de novo pathway and in the salvage pathway of purine nucleotide biosynthesis. Catalyzes the first committed step in the biosynthesis of AMP from IMP. The protein is Adenylosuccinate synthetase of Drosophila pseudoobscura pseudoobscura (Fruit fly).